Consider the following 250-residue polypeptide: Probable transcriptional regulatory protein Emin_1151 (250 aa).

This sequence belongs to the TACO1 family.

The protein localises to the cytoplasm. The polypeptide is Probable transcriptional regulatory protein Emin_1151 (Elusimicrobium minutum (strain Pei191)).